A 659-amino-acid polypeptide reads, in one-letter code: Putative oxidoreductase AegA (659 aa).

5 consecutive 4Fe-4S ferredoxin-type domains span residues 3–22 (RFIM…EIAC), 47–77 (HQQQ…SHVD), 78–107 (DSIQ…IVLT), 114–147 (VKAT…LVTD), and 218–252 (DQAQ…WIEL). [4Fe-4S] cluster-binding residues include Cys-12, Cys-15, Cys-18, Cys-22, Cys-56, Cys-59, Cys-64, Cys-68, Cys-87, Cys-90, Cys-93, Cys-97, Cys-121, Cys-124, Cys-133, Cys-137, Cys-227, Cys-230, Cys-236, and Cys-240.

Requires [4Fe-4S] cluster as cofactor.

Functionally, involved in formate-dependent uric acid degradation under microaerobic and anaerobic conditions. May reduce the enzymes necessary for uric acid degradation. The sequence is that of Putative oxidoreductase AegA from Escherichia coli (strain K12).